The chain runs to 466 residues: Asparagine--tRNA ligase (466 aa).

Belongs to the class-II aminoacyl-tRNA synthetase family. In terms of assembly, homodimer.

It is found in the cytoplasm. The catalysed reaction is tRNA(Asn) + L-asparagine + ATP = L-asparaginyl-tRNA(Asn) + AMP + diphosphate + H(+). The protein is Asparagine--tRNA ligase of Salmonella paratyphi A (strain ATCC 9150 / SARB42).